The chain runs to 952 residues: MGVRHPPCSHRLLAVCALVSLATAALLGHILLHDFLLVPRELSGSSPVLEETHPAHQQGASRPGPRDAQAHPGRPRAVPTQCDVPPNSRFDCAPDKAITQEQCEARGCCYIPAKQGLQGAQMGQPWCFFPPSYPSYKLENLSSSEMGYTATLTRTTPTFFPKDILTLRLDVMMETENRLHFTIKDPANRRYEVPLETPHVHSRAPSPLYSVEFSEEPFGVIVRRQLDGRVLLNTTVAPLFFADQFLQLSTSLPSQYITGLAEHLSPLMLSTSWTRITLWNRDLAPTPGANLYGSHPFYLALEDGGSAHGVFLLNSNAMDVVLQPSPALSWRSTGGILDVYIFLGPEPKSVVQQYLDVVGYPFMPPYWGLGFHLCRWGYSSTAITRQVVENMTRAHFPLDVQWNDLDYMDSRRDFTFNKDGFRDFPAMVQELHQGGRRYMMIVDPAISSSGPAGSYRPYDEGLRRGVFITNETGQPLIGKVWPGSTAFPDFTNPTALAWWEDMVAEFHDQVPFDGMWIDMNEPSNFIRGSEDGCPNNELENPPYVPGVVGGTLQAATICASSHQFLSTHYNLHNLYGLTEAIASHRALVKARGTRPFVISRSTFAGHGRYAGHWTGDVWSSWEQLASSVPEILQFNLLGVPLVGADVCGFLGNTSEELCVRWTQLGAFYPFMRNHNSLLSLPQEPYSFSEPAQQAMRKALTLRYALLPHLYTLFHQAHVAGETVARPLFLEFPKDSSTWTVDHQLLWGEALLITPVLQAGKAEVTGYFPLGTWYDLQTVPVEALGSLPPPPAAPREPAIHSEGQWVTLPAPLDTINVHLRAGYIIPLQGPGLTTTESRQQPMALAVALTKGGEARGELFWDDGESLEVLERGAYTQVIFLARNNTIVNELVRVTSEGAGLQLQKVTVLGVATAPQQVLSNGVPVSNFTYSPDTKVLDICVSLLMGEQFLVSWC.

Positions 1–27 (MGVRHPPCSHRLLAVCALVSLATAALL) are cleaved as a signal peptide. A propeptide spanning residues 28–69 (GHILLHDFLLVPRELSGSSPVLEETHPAHQQGASRPGPRDAQ) is cleaved from the precursor. The interval 47 to 82 (PVLEETHPAHQQGASRPGPRDAQAHPGRPRAVPTQC) is disordered. The 52-residue stretch at 80 to 131 (TQCDVPPNSRFDCAPDKAITQEQCEARGCCYIPAKQGLQGAQMGQPWCFFPP) folds into the P-type domain. Cystine bridges form between cysteine 82–cysteine 109, cysteine 92–cysteine 108, and cysteine 103–cysteine 127. N-linked (GlcNAc...) asparagine glycans are attached at residues asparagine 140, asparagine 233, and asparagine 390. Aspartate 404 contributes to the substrate binding site. Residue asparagine 470 is glycosylated (N-linked (GlcNAc...) asparagine). Aspartate 518 functions as the Nucleophile in the catalytic mechanism. Glutamate 521 is an active-site residue. Cysteines 533 and 558 form a disulfide. Arginine 600 and aspartate 616 together coordinate substrate. Cysteine 647 and cysteine 658 form a disulfide bridge. Asparagine 652 carries an N-linked (GlcNAc...) asparagine glycan. Residue histidine 674 participates in substrate binding. N-linked (GlcNAc...) asparagine glycans are attached at residues asparagine 882 and asparagine 925.

It belongs to the glycosyl hydrolase 31 family. The different forms of acid glucosidase are obtained by proteolytic processing. Post-translationally, phosphorylation of mannose residues ensures efficient transport of the enzyme to the lysosomes via the mannose 6-phosphate receptor.

The protein localises to the lysosome. Its subcellular location is the lysosome membrane. The enzyme catalyses Hydrolysis of terminal, non-reducing (1-&gt;4)-linked alpha-D-glucose residues with release of alpha-D-glucose.. Essential for the degradation of glycogen in lysosomes. Has highest activity on alpha-1,4-linked glycosidic linkages, but can also hydrolyze alpha-1,6-linked glucans. The sequence is that of Lysosomal alpha-glucosidase (GAA) from Homo sapiens (Human).